We begin with the raw amino-acid sequence, 611 residues long: UvrABC system protein C (611 aa).

A GIY-YIG domain is found at 14 to 91 (TSPGCYIHKD…IKENQPKYNI (78 aa)). Positions 196 to 231 (DQIIEDLRGKMAGAAQAMEFEKAAEYRDLIQSIGTL) constitute a UVR domain. Residues 587 to 611 (KLNPKTQEQEQAQLREVAEPQIGLE) form a disordered region.

Belongs to the UvrC family. As to quaternary structure, interacts with UvrB in an incision complex.

The protein resides in the cytoplasm. Functionally, the UvrABC repair system catalyzes the recognition and processing of DNA lesions. UvrC both incises the 5' and 3' sides of the lesion. The N-terminal half is responsible for the 3' incision and the C-terminal half is responsible for the 5' incision. In Streptococcus sanguinis (strain SK36), this protein is UvrABC system protein C.